A 362-amino-acid chain; its full sequence is Phospho-N-acetylmuramoyl-pentapeptide-transferase (362 aa).

Helical transmembrane passes span 28–48, 72–92, 94–114, 131–151, 169–189, 200–220, 236–256, 264–284, 290–310, and 339–359; these read IISF…VITW, TPTM…MVCA, LSNI…ILGL, VLHK…IIFM, FMPQ…VGTS, GLAI…AWIS, FSGE…GFLW, IFMG…IAVL, LLLI…LQVI, and IIVR…ITLK.

The protein belongs to the glycosyltransferase 4 family. MraY subfamily. The cofactor is Mg(2+).

It is found in the cell inner membrane. The catalysed reaction is UDP-N-acetyl-alpha-D-muramoyl-L-alanyl-gamma-D-glutamyl-meso-2,6-diaminopimeloyl-D-alanyl-D-alanine + di-trans,octa-cis-undecaprenyl phosphate = di-trans,octa-cis-undecaprenyl diphospho-N-acetyl-alpha-D-muramoyl-L-alanyl-D-glutamyl-meso-2,6-diaminopimeloyl-D-alanyl-D-alanine + UMP. It functions in the pathway cell wall biogenesis; peptidoglycan biosynthesis. Its function is as follows. Catalyzes the initial step of the lipid cycle reactions in the biosynthesis of the cell wall peptidoglycan: transfers peptidoglycan precursor phospho-MurNAc-pentapeptide from UDP-MurNAc-pentapeptide onto the lipid carrier undecaprenyl phosphate, yielding undecaprenyl-pyrophosphoryl-MurNAc-pentapeptide, known as lipid I. The sequence is that of Phospho-N-acetylmuramoyl-pentapeptide-transferase from Blochmanniella pennsylvanica (strain BPEN).